Here is a 162-residue protein sequence, read N- to C-terminus: Retinoic acid receptor responder protein 2 (162 aa).

The first 20 residues, 1–20 (MWQLLLPLALGLGTMGLGRA), serve as a signal peptide directing secretion. Cystine bridges form between cysteine 77–cysteine 87, cysteine 98–cysteine 117, and cysteine 101–cysteine 135. Residues 156–162 (FIKALSP) constitute a propeptide that is removed on maturation.

In terms of processing, secreted in an inactive precursor form, prochemerin, which is proteolytically processed by a variety of extracellular proteases to generate forms with differing levels of bioactivity. For example, the removal of five amino acids results in chemerin-157, which exhibits the highest activity, while removal of six amino acids results in chemerin-156 which has slightly less activity. Some proteases are able to cleave at more than one site and chemerin forms may be sequentially processed by different enzymes to modulate activity levels. The coordinated expression and activity of chemerin-modifying enzymes is essential for regulating its bioactivation, inactivation and, consequently, biological function. Cathepsin G cleaves six C-terminal amino acids from prochemerin (chemerin-156), elastase is able to cleave five (chemerin-157), seven (chemerin-155) or ten (chemerin-152), plasmin cleaves four amino acids (chemerin-158), and tryptase cleaves four (chemerin-158) or seven (chemerin-155). Multiple cleavages might be required to fully activate chemerin, with an initial tryptase cleavage resulting in chemerin with low activity (chemerin-158), and a second cleavage by carboxypeptidase N or B producing highly active chemerin (chemerin-157).

The protein localises to the secreted. Adipocyte-secreted protein (adipokine) that regulates adipogenesis, metabolism and inflammation through activation of the chemokine-like receptor 1 (CMKLR1). Also acts as a ligand for CMKLR2. Can also bind to C-C chemokine receptor-like 2 (CCRL2), but with a lower affinity than it does to CMKLR1 or CMKLR2. Positively regulates adipocyte differentiation, modulates the expression of adipocyte genes involved in lipid and glucose metabolism and might play a role in angiogenesis, a process essential for the expansion of white adipose tissue. Also acts as a pro-inflammatory adipokine, causing an increase in secretion of pro-inflammatory and prodiabetic adipokines, which further impair adipose tissue metabolic function and have negative systemic effects including impaired insulin sensitivity, altered glucose and lipid metabolism, and a decrease in vascular function in other tissues. Can have both pro- and anti-inflammatory properties depending on the modality of enzymatic cleavage by different classes of proteases. Acts as a chemotactic factor for leukocyte populations expressing CMKLR1, particularly immature plasmacytoid dendritic cells, but also immature myeloid DCs, macrophages and natural killer cells. Exerts an anti-inflammatory role by preventing TNF/TNFA-induced VCAM1 expression and monocytes adhesion in vascular endothelial cells. The effect is mediated via inhibiting activation of NF-kappa-B and CRK/p38 through stimulation of AKT1/NOS3 signaling and nitric oxide production. Exhibits an antimicrobial function in the skin. The polypeptide is Retinoic acid receptor responder protein 2 (RARRES2) (Bos taurus (Bovine)).